The chain runs to 318 residues: Ubiquitin-like domain-containing CTD phosphatase 1 (318 aa).

An N-acetylalanine modification is found at alanine 2. Residues 3–81 (LPIIVKWGGQ…IMMMGTREES (79 aa)) form the Ubiquitin-like domain. Lysine 117 is modified (N6-acetyllysine). The FCP1 homology domain maps to 133-294 (PREGKKLLVL…LKLTQYLKEI (162 aa)). Mg(2+) contacts are provided by aspartate 143, aspartate 145, and aspartate 253.

Requires Mg(2+) as cofactor.

The protein resides in the nucleus. The enzyme catalyses O-phospho-L-seryl-[protein] + H2O = L-seryl-[protein] + phosphate. It carries out the reaction O-phospho-L-threonyl-[protein] + H2O = L-threonyl-[protein] + phosphate. Functionally, dephosphorylates 26S nuclear proteasomes, thereby decreasing their proteolytic activity. Recruited to the 19S regulatory particle of the 26S proteasome through its interaction with 19S component PSMD2/RPN1. Once recruited, dephosphorylates 19S component PSMC2/RPT1 which impairs PSMC2 ATPase activity and disrupts 26S proteasome assembly. Has also been reported to stimulate the proteolytic activity of the 26S proteasome. This is Ubiquitin-like domain-containing CTD phosphatase 1 (UBLCP1) from Bos taurus (Bovine).